The primary structure comprises 180 residues: ATP-dependent protease subunit HslV (180 aa).

Residue threonine 7 is part of the active site. The Na(+) site is built by alanine 163, cysteine 166, and threonine 169.

Belongs to the peptidase T1B family. HslV subfamily. A double ring-shaped homohexamer of HslV is capped on each side by a ring-shaped HslU homohexamer. The assembly of the HslU/HslV complex is dependent on binding of ATP.

Its subcellular location is the cytoplasm. It carries out the reaction ATP-dependent cleavage of peptide bonds with broad specificity.. Its activity is regulated as follows. Allosterically activated by HslU binding. Protease subunit of a proteasome-like degradation complex believed to be a general protein degrading machinery. The sequence is that of ATP-dependent protease subunit HslV from Cytophaga hutchinsonii (strain ATCC 33406 / DSM 1761 / CIP 103989 / NBRC 15051 / NCIMB 9469 / D465).